Reading from the N-terminus, the 184-residue chain is Protein MEH1 (184 aa).

Glycine 2 carries N-myristoyl glycine lipidation. 2 S-palmitoyl cysteine lipidation sites follow: cysteine 7 and cysteine 8. The stretch at 30–71 forms a coiled coil; the sequence is QGNANDEYDAEQMRLKEHEHEQKLLAREQELRDIVANTNDKL. A disordered region spans residues 89–147; the sequence is LQEALDKRQQEEGGDSREDERSAGDDNLSGHSVPSSGSAQATTHQTAPRTNTFTLLTSP. Residues 92–112 show a composition bias toward basic and acidic residues; that stretch reads ALDKRQQEEGGDSREDERSAG. Over residues 117–147 the composition is skewed to polar residues; it reads SGHSVPSSGSAQATTHQTAPRTNTFTLLTSP. Phosphoserine occurs at positions 146 and 149.

Component of the GSE complex composed of GTR1, GTR2, SLM4, MEH1 and LTV1. Component of the EGO complex, at least composed of GTR2, SLM4 and MEH1.

The protein localises to the vacuole membrane. Its function is as follows. Component of the GSE complex, a GTPase complex required for intracellular sorting of GAP1 out of the endosome. Component of the EGO complex, a complex involved in the regulation of microautophagy. This is Protein MEH1 (MEH1) from Saccharomyces cerevisiae (strain ATCC 204508 / S288c) (Baker's yeast).